A 449-amino-acid chain; its full sequence is Packaging protein 1 (449 aa).

The segment at 1–77 (METRGRRPAA…QPAKRGDMLD (77 aa)) is disordered. Residue 171 to 178 (GPTGCGKS) coordinates ATP. The interval 440-449 (RAYRARKTPK) is DNA-binding.

Belongs to the adenoviridae packaging protein 1 family. As to quaternary structure, homodimer. Part of a genome packaging complex composed of packaging proteins 1, 2 and 3; this complex specifically binds to the packaging sequence on the left end of viral genomic DNA and performs packaging of the viral genome. Interacts with protein 33K.

The protein localises to the virion. The protein resides in the host nucleus. It is found in the host nucleoplasm. It localises to the host nucleolus. Component of the packaging machinery which encapsidates the viral DNA into preformed capsids and transcriptional activator of the viral major late promoter (MLP). Binds, along with packaging proteins 2 and 3, to the specific packaging sequence on the left end of viral genomic DNA and displays ATPase activity thereby providing the power stroke of the packaging machinery. The activity of packaging protein IVa2 is stimulated by protein 33K which acts as a terminase. May be the protein that pumps DNA into the capsid powered by ATP hydrolysis. Specifically binds to the 5'-CG-3' nucleotides of the repeats making up the packaging sequence. Component of the DEF-A and DEF-B transcription factors that bind downstream elements of the major late promoter (MLP), and stimulate transcription from the MLP after initiation of viral DNA replication. DEF-A is a heterodimer packaging proteins 1 and 2 and DEF-B is a homodimer of packaging protein 1. This chain is Packaging protein 1, found in Homo sapiens (Human).